Here is a 156-residue protein sequence, read N- to C-terminus: Small ribosomal subunit protein uS7 (156 aa).

The protein belongs to the universal ribosomal protein uS7 family. As to quaternary structure, part of the 30S ribosomal subunit. Contacts proteins S9 and S11.

Functionally, one of the primary rRNA binding proteins, it binds directly to 16S rRNA where it nucleates assembly of the head domain of the 30S subunit. Is located at the subunit interface close to the decoding center, probably blocks exit of the E-site tRNA. The sequence is that of Small ribosomal subunit protein uS7 from Shewanella denitrificans (strain OS217 / ATCC BAA-1090 / DSM 15013).